The following is a 169-amino-acid chain: 4-hydroxylaminobenzoate lyase (169 aa).

This sequence belongs to the PnbB family.

It carries out the reaction 4-hydroxylaminobenzoate + H2O + H(+) = 3,4-dihydroxybenzoate + NH4(+). Lyase involved in the degradation of nitroaromatic compounds. Catalyzes the conversion of 4-hydroxylaminobenzoate to 3,4-dihydroxybenzoate (protocatechuate). This is 4-hydroxylaminobenzoate lyase from Nocardioides sp. (strain LMS-CY).